The chain runs to 448 residues: Putative diacyglycerol O-acyltransferase MT3848 (448 aa).

Histidine 136 functions as the Proton acceptor in the catalytic mechanism.

The protein belongs to the long-chain O-acyltransferase family.

It carries out the reaction an acyl-CoA + a 1,2-diacyl-sn-glycerol = a triacyl-sn-glycerol + CoA. The protein operates within glycerolipid metabolism; triacylglycerol biosynthesis. The polypeptide is Putative diacyglycerol O-acyltransferase MT3848 (Mycobacterium tuberculosis (strain CDC 1551 / Oshkosh)).